The sequence spans 45 residues: Large ribosomal subunit protein bL34 (45 aa).

Residues 1–45 (MTKRTFGGTSRKRKRVSGFRVRMRSHTGRRVVRTRRKRGRSRLTV) form a disordered region. The span at 10–45 (SRKRKRVSGFRVRMRSHTGRRVVRTRRKRGRSRLTV) shows a compositional bias: basic residues.

Belongs to the bacterial ribosomal protein bL34 family.

This is Large ribosomal subunit protein bL34 from Prochlorococcus marinus (strain NATL2A).